A 100-amino-acid chain; its full sequence is Urease subunit gamma (100 aa).

This sequence belongs to the urease gamma subunit family. In terms of assembly, heterotrimer of UreA (gamma), UreB (beta) and UreC (alpha) subunits. Three heterotrimers associate to form the active enzyme.

It localises to the cytoplasm. The catalysed reaction is urea + 2 H2O + H(+) = hydrogencarbonate + 2 NH4(+). It functions in the pathway nitrogen metabolism; urea degradation; CO(2) and NH(3) from urea (urease route): step 1/1. The protein is Urease subunit gamma of Enterobacter sp. (strain 638).